A 449-amino-acid chain; its full sequence is Clusterin (449 aa).

The N-terminal stretch at 1–22 is a signal peptide; sequence MMKTLLLFVGLLLTWESGQVLG. The Nuclear localization signal motif lies at 78–81; sequence KKKK. Asparagine 86 is a glycosylation site (N-linked (GlcNAc...) (complex) asparagine). 5 disulfide bridges follow: cysteine 102/cysteine 313, cysteine 113/cysteine 305, cysteine 116/cysteine 302, cysteine 121/cysteine 295, and cysteine 129/cysteine 285. Asparagine 103 is a glycosylation site (N-linked (GlcNAc...) asparagine). Serine 133 is subject to Phosphoserine. Asparagine 145, asparagine 291, and asparagine 354 each carry an N-linked (GlcNAc...) asparagine glycan. Asparagine 374 carries an N-linked (GlcNAc...) (complex) asparagine glycan. Serine 396 carries the phosphoserine modification. The short motif at 443–447 is the Nuclear localization signal element; that stretch reads RKKHR.

Belongs to the clusterin family. As to quaternary structure, antiparallel disulfide-linked heterodimer of an alpha chain and a beta chain. Self-associates and forms higher oligomers. Interacts with a broad range of misfolded proteins, including APP, APOC2 and LYZ. Slightly acidic pH promotes interaction with misfolded proteins. Forms high-molecular weight oligomers upon interaction with misfolded proteins. Interacts with APOA1, LRP2, CLUAP1 and PON1. Interacts with the complement membrane attack complex. Interacts (via alpha chain) with XRCC6. Interacts with SYVN1, COMMD1, BTRC, CUL1 and with ubiquitin and SCF (SKP1-CUL1-F-box protein) E3 ubiquitin-protein ligase complexes. Interacts (via alpha chain) with BAX in stressed cells, where BAX undergoes a conformation change leading to association with the mitochondrial membrane. Does not interact with BAX in unstressed cells. Found in a complex with LTF, CLU, EPPIN and SEMG1. Interacts (immaturely glycosylated pre-secreted form) with HSPA5; this interaction promotes CLU stability and facilitates stress-induced CLU retrotranslocation from the secretory pathway to the mitochondria, thereby reducing stress-induced apoptosis by stabilizing mitochondrial membrane integrity. Interacts (isoform 4) with BCL2L1; this interaction releases and activates BAX and promotes cell death. Interacts with TGFBR2 and ACVR1. Interacts (secreted form) with STMN3; this interaction may act as an important modulator during neuronal differentiation. Interacts with VLDLR and LRP8. In terms of processing, proteolytically cleaved on its way through the secretory system, probably within the Golgi lumen. Proteolytic cleavage is not necessary for its chaperone activity. All non-secreted forms are not proteolytically cleaved. Chaperone activity of uncleaved forms is dependent on a non-reducing environment. Post-translationally, polyubiquitinated, leading to proteasomal degradation. Under cellular stress, the intracellular level of cleaved form is reduced due to proteasomal degradation. Extensively glycosylated with sulfated N-linked carbohydrates. About 30% of the protein mass is comprised of complex N-linked carbohydrate. Endoplasmic reticulum (ER) stress induces changes in glycosylation status and increases level of hypoglycosylated forms. Core carbohydrates are essential for chaperone activity. Non-secreted forms are hypoglycosylated or unglycosylated. Detected in blood plasma, cerebrospinal fluid, milk, seminal plasma and colon mucosa. Detected in the germinal center of colon lymphoid nodules and in colon parasympathetic ganglia of the Auerbach plexus (at protein level). Ubiquitous. Detected in brain, testis, ovary, liver and pancreas, and at lower levels in kidney, heart, spleen and lung.

The protein resides in the secreted. The protein localises to the cytoplasm. It is found in the nucleus. Its subcellular location is the mitochondrion membrane. It localises to the cytosol. The protein resides in the microsome. The protein localises to the endoplasmic reticulum. It is found in the mitochondrion. Its subcellular location is the perinuclear region. It localises to the cytoplasmic vesicle. The protein resides in the secretory vesicle. The protein localises to the chromaffin granule. Functionally, functions as extracellular chaperone that prevents aggregation of non native proteins. Prevents stress-induced aggregation of blood plasma proteins. Inhibits formation of amyloid fibrils by APP, APOC2, B2M, CALCA, CSN3, SNCA and aggregation-prone LYZ variants (in vitro). Does not require ATP. Maintains partially unfolded proteins in a state appropriate for subsequent refolding by other chaperones, such as HSPA8/HSC70. Does not refold proteins by itself. Binding to cell surface receptors triggers internalization of the chaperone-client complex and subsequent lysosomal or proteasomal degradation. Protects cells against apoptosis and against cytolysis by complement: inhibits assembly of the complement membrane attack complex (MAC) by preventing polymerization of C9 pore component of the MAC complex. Intracellular forms interact with ubiquitin and SCF (SKP1-CUL1-F-box protein) E3 ubiquitin-protein ligase complexes and promote the ubiquitination and subsequent proteasomal degradation of target proteins. Promotes proteasomal degradation of COMMD1 and IKBKB. Modulates NF-kappa-B transcriptional activity. A mitochondrial form suppresses BAX-dependent release of cytochrome c into the cytoplasm and inhibit apoptosis. Plays a role in the regulation of cell proliferation. An intracellular form suppresses stress-induced apoptosis by stabilizing mitochondrial membrane integrity through interaction with HSPA5. Secreted form does not affect caspase or BAX-mediated intrinsic apoptosis and TNF-induced NF-kappa-B-activity. Secreted form act as an important modulator during neuronal differentiation through interaction with STMN3. Plays a role in the clearance of immune complexes that arise during cell injury. Does not affect caspase or BAX-mediated intrinsic apoptosis and TNF-induced NF-kappa-B-activity. Its function is as follows. Does not affect caspase or BAX-mediated intrinsic apoptosis and TNF-induced NF-kappa-B-activity. Promotes cell death through interaction with BCL2L1 that releases and activates BAX. This is Clusterin from Homo sapiens (Human).